The chain runs to 473 residues: Lactate utilization protein B (473 aa).

4Fe-4S ferredoxin-type domains are found at residues 302-332 (GSEF…GHSY) and 351-380 (YDDY…LHDL). C311, C314, C317, C321, C364, C367, and C371 together coordinate [4Fe-4S] cluster.

It belongs to the LutB/YkgF family.

Is involved in L-lactate degradation and allows cells to grow with lactate as the sole carbon source. Has probably a role as an electron transporter during oxidation of L-lactate. This Bacillus cytotoxicus (strain DSM 22905 / CIP 110041 / 391-98 / NVH 391-98) protein is Lactate utilization protein B.